The primary structure comprises 134 residues: Small ribosomal subunit protein uS8c (134 aa).

It belongs to the universal ribosomal protein uS8 family. As to quaternary structure, part of the 30S ribosomal subunit.

The protein resides in the plastid. It is found in the chloroplast. Functionally, one of the primary rRNA binding proteins, it binds directly to 16S rRNA central domain where it helps coordinate assembly of the platform of the 30S subunit. This chain is Small ribosomal subunit protein uS8c (rps8), found in Vitis vinifera (Grape).